A 773-amino-acid polypeptide reads, in one-letter code: 4'-phosphopantetheine phosphatase (773 aa).

Position 2 is an N-acetylalanine (Ala2). The segment at 2-402 is pantothenate kinase; the sequence is AECRASGGGS…APELCPTQRA (401 aa). 2 residues coordinate acetyl-CoA: Ser196 and Ser199. Tyr320 is modified (3'-nitrotyrosine). The segment at 403–773 is 4'-phosphopantetheine phosphatase; that stretch reads RSGTFDLLEM…VIFKYEVPAE (371 aa). Ser404 carries the post-translational modification Phosphoserine. Phosphothreonine is present on Thr406. Asp623, Asn624, and Asp659 together coordinate Mn(2+). Residues 724-728 carry the Subfamily II EGMGR motif motif; it reads EGMGR.

The protein in the N-terminal section; belongs to the type II pantothenate kinase family. It in the C-terminal section; belongs to the damage-control phosphatase family. Phosphopantetheine phosphatase (II) subfamily. Homodimer. Interacts with PKM. It depends on Mn(2+) as a cofactor. Ni(2+) serves as cofactor.

Its subcellular location is the cytoplasm. The enzyme catalyses (R)-4'-phosphopantetheine + H2O = (R)-pantetheine + phosphate. The catalysed reaction is (R)-4'-phosphopantetheine sulfonate + H2O = (R)-pantetheine sulfonate + phosphate. It carries out the reaction (R)-4'-phospho-S-sulfopantetheine + H2O = (R)-S-sulfopantetheine + phosphate. Its activity is regulated as follows. Activity is strongly promoted by Co(2+), Ni(2+), Mg(2+) and Mn(2+). Activity is inhibited by EDTA. Phosphatase which shows a preference for 4'-phosphopantetheine and its oxidatively damaged forms (sulfonate or S-sulfonate), providing strong indirect evidence that the phosphatase activity pre-empts damage in the coenzyme A (CoA) pathway. Hydrolyzing excess 4'-phosphopantetheine could constitute a directed overflow mechanism to prevent its oxidation to the S-sulfonate, sulfonate, or other forms. Hydrolyzing 4'-phosphopantetheine sulfonate or S-sulfonate would forestall their conversion to inactive forms of CoA and acyl carrier protein. May play a role in the physiological regulation of CoA intracellular levels. In Rattus norvegicus (Rat), this protein is 4'-phosphopantetheine phosphatase.